Consider the following 355-residue polypeptide: Erythronate-4-phosphate dehydrogenase (355 aa).

Positions 45 and 66 each coordinate substrate. D146 contributes to the NAD(+) binding site. Residue R206 is part of the active site. D229 lines the NAD(+) pocket. The active site involves E234. Catalysis depends on H251, which acts as the Proton donor. G254 contacts NAD(+). Y255 contacts substrate.

It belongs to the D-isomer specific 2-hydroxyacid dehydrogenase family. PdxB subfamily. In terms of assembly, homodimer.

It is found in the cytoplasm. It carries out the reaction 4-phospho-D-erythronate + NAD(+) = (R)-3-hydroxy-2-oxo-4-phosphooxybutanoate + NADH + H(+). It participates in cofactor biosynthesis; pyridoxine 5'-phosphate biosynthesis; pyridoxine 5'-phosphate from D-erythrose 4-phosphate: step 2/5. In terms of biological role, catalyzes the oxidation of erythronate-4-phosphate to 3-hydroxy-2-oxo-4-phosphonooxybutanoate. This chain is Erythronate-4-phosphate dehydrogenase, found in Acinetobacter baumannii (strain ATCC 17978 / DSM 105126 / CIP 53.77 / LMG 1025 / NCDC KC755 / 5377).